The sequence spans 367 residues: Putative F-box protein At3g21120 (367 aa).

The region spanning 1–43 (MHLPEDLVLEILSKVPAVSLARFRSTCRRWNALVVDGSFAKKH) is the F-box domain.

This chain is Putative F-box protein At3g21120, found in Arabidopsis thaliana (Mouse-ear cress).